The chain runs to 166 residues: uncharacterized protein (166 aa).

To B.subtilis YpjQ.

This is an uncharacterized protein from Bacillus subtilis (strain 168).